Reading from the N-terminus, the 156-residue chain is MGRGKITARRPVAPDSKYNSVVVTRFIGRMMLSGKKSITTKIMYDSFDKIKEKTGEEPLAVFSKALDNVKPVVEVKSRRVGGATYQVPMDIPEGRREALAMRWIIGAARKRSGHEMSERLASELIDAYNNTGTAFKKKEEVHRMAEANKAFAHFRW.

This sequence belongs to the universal ribosomal protein uS7 family. As to quaternary structure, part of the 30S ribosomal subunit. Contacts proteins S9 and S11.

Its function is as follows. One of the primary rRNA binding proteins, it binds directly to 16S rRNA where it nucleates assembly of the head domain of the 30S subunit. Is located at the subunit interface close to the decoding center, probably blocks exit of the E-site tRNA. In Treponema denticola (strain ATCC 35405 / DSM 14222 / CIP 103919 / JCM 8153 / KCTC 15104), this protein is Small ribosomal subunit protein uS7.